Reading from the N-terminus, the 319-residue chain is Acetyl-coenzyme A carboxylase carboxyl transferase subunit alpha (319 aa).

Residues 35 to 296 (NIDEEVHRLR…KAQLLTDLAD (262 aa)) form the CoA carboxyltransferase C-terminal domain.

The protein belongs to the AccA family. In terms of assembly, acetyl-CoA carboxylase is a heterohexamer composed of biotin carboxyl carrier protein (AccB), biotin carboxylase (AccC) and two subunits each of ACCase subunit alpha (AccA) and ACCase subunit beta (AccD).

It localises to the cytoplasm. The enzyme catalyses N(6)-carboxybiotinyl-L-lysyl-[protein] + acetyl-CoA = N(6)-biotinyl-L-lysyl-[protein] + malonyl-CoA. It participates in lipid metabolism; malonyl-CoA biosynthesis; malonyl-CoA from acetyl-CoA: step 1/1. Its function is as follows. Component of the acetyl coenzyme A carboxylase (ACC) complex. First, biotin carboxylase catalyzes the carboxylation of biotin on its carrier protein (BCCP) and then the CO(2) group is transferred by the carboxyltransferase to acetyl-CoA to form malonyl-CoA. In Escherichia coli O45:K1 (strain S88 / ExPEC), this protein is Acetyl-coenzyme A carboxylase carboxyl transferase subunit alpha.